A 342-amino-acid chain; its full sequence is Transmembrane protein 268 (342 aa).

Residues 1–30 (MACEPQVDPGATGPLPPSSPGWSALPGGSP) are disordered. A run of 2 helical transmembrane segments spans residues 105 to 125 (AFAVVFYVVVWANIYSTSQMF) and 132 to 152 (AGMLLVTLAAVSLTLTLVLVF).

Interacts with ITGAM; this interaction inhibits ITGAM degradation via the endosome-lysosome pathway. Interacts with ITGB4; this interaction prevents ITGB4 degradation.

The protein localises to the cell membrane. Stabilizes cell surface expression of ITGAM and participates in the adhesion and migration of phagocytes during bacterial clearance. The protein is Transmembrane protein 268 of Homo sapiens (Human).